We begin with the raw amino-acid sequence, 359 residues long: N-acetyl-gamma-glutamyl-phosphate reductase (359 aa).

C162 is a catalytic residue.

Belongs to the NAGSA dehydrogenase family. Type 1 subfamily.

It is found in the cytoplasm. The catalysed reaction is N-acetyl-L-glutamate 5-semialdehyde + phosphate + NADP(+) = N-acetyl-L-glutamyl 5-phosphate + NADPH + H(+). It participates in amino-acid biosynthesis; L-arginine biosynthesis; N(2)-acetyl-L-ornithine from L-glutamate: step 3/4. Its function is as follows. Catalyzes the NADPH-dependent reduction of N-acetyl-5-glutamyl phosphate to yield N-acetyl-L-glutamate 5-semialdehyde. The chain is N-acetyl-gamma-glutamyl-phosphate reductase from Prochlorococcus marinus (strain NATL1A).